We begin with the raw amino-acid sequence, 96 residues long: Large ribosomal subunit protein uL23 (96 aa).

The protein belongs to the universal ribosomal protein uL23 family. In terms of assembly, part of the 50S ribosomal subunit. Contacts protein L29, and trigger factor when it is bound to the ribosome.

Its function is as follows. One of the early assembly proteins it binds 23S rRNA. One of the proteins that surrounds the polypeptide exit tunnel on the outside of the ribosome. Forms the main docking site for trigger factor binding to the ribosome. This Clostridium novyi (strain NT) protein is Large ribosomal subunit protein uL23.